Here is a 294-residue protein sequence, read N- to C-terminus: Peroxidase-like protein 3 (294 aa).

The N-linked (GlcNAc...) asparagine glycan is linked to Asn129.

This sequence belongs to the peroxidase family. As to expression, component of the acid-insoluble and acid-soluble organic matrix of calcified layers of the shell (at protein level).

Its subcellular location is the secreted. The protein is Peroxidase-like protein 3 of Lottia gigantea (Giant owl limpet).